The primary structure comprises 339 residues: Anthranilate phosphoribosyltransferase (339 aa).

5-phospho-alpha-D-ribose 1-diphosphate-binding positions include Gly79, Gly82–Asp83, Ser87, Asn89–Thr92, Lys107–Ser115, and Ser119. Residue Gly79 coordinates anthranilate. Ser91 contributes to the Mg(2+) binding site. Asn110 contributes to the anthranilate binding site. Arg165 contacts anthranilate. Residues Asp224 and Glu225 each coordinate Mg(2+).

This sequence belongs to the anthranilate phosphoribosyltransferase family. Homodimer. Mg(2+) serves as cofactor.

It catalyses the reaction N-(5-phospho-beta-D-ribosyl)anthranilate + diphosphate = 5-phospho-alpha-D-ribose 1-diphosphate + anthranilate. The protein operates within amino-acid biosynthesis; L-tryptophan biosynthesis; L-tryptophan from chorismate: step 2/5. In terms of biological role, catalyzes the transfer of the phosphoribosyl group of 5-phosphorylribose-1-pyrophosphate (PRPP) to anthranilate to yield N-(5'-phosphoribosyl)-anthranilate (PRA). This chain is Anthranilate phosphoribosyltransferase, found in Listeria monocytogenes serotype 4b (strain CLIP80459).